Here is a 161-residue protein sequence, read N- to C-terminus: uncharacterized protein (161 aa).

In terms of assembly, interacts with ribosomes.

This is an uncharacterized protein from Saccharomyces cerevisiae (strain ATCC 204508 / S288c) (Baker's yeast).